We begin with the raw amino-acid sequence, 249 residues long: uncharacterized protein (249 aa).

2 helical membrane passes run 49–69 (ILLS…CYLL) and 223–243 (IVMS…VHHL).

It localises to the cell membrane. This is an uncharacterized protein from Bacillus anthracis.